Reading from the N-terminus, the 339-residue chain is D-erythrose-4-phosphate dehydrogenase (339 aa).

NAD(+) contacts are provided by residues 12-13 (RI) and Arg-81. Substrate is bound by residues 154–156 (SCT), Arg-200, 213–214 (TR), and Arg-236. The Nucleophile role is filled by Cys-155. Asn-318 lines the NAD(+) pocket.

Belongs to the glyceraldehyde-3-phosphate dehydrogenase family. Epd subfamily. In terms of assembly, homotetramer.

The protein resides in the cytoplasm. The catalysed reaction is D-erythrose 4-phosphate + NAD(+) + H2O = 4-phospho-D-erythronate + NADH + 2 H(+). It participates in cofactor biosynthesis; pyridoxine 5'-phosphate biosynthesis; pyridoxine 5'-phosphate from D-erythrose 4-phosphate: step 1/5. In terms of biological role, catalyzes the NAD-dependent conversion of D-erythrose 4-phosphate to 4-phosphoerythronate. This chain is D-erythrose-4-phosphate dehydrogenase, found in Cronobacter sakazakii (strain ATCC BAA-894) (Enterobacter sakazakii).